The chain runs to 1185 residues: Calmodulin-binding transcription activator homolog 1 (1185 aa).

The CG-1 DNA-binding region spans 72 to 200 (AVELFPCFKD…YLNVKTNNKI (129 aa)). 2 disordered regions span residues 252 to 277 (GVNLPTSPLPQEPSSSTSRELERRNS) and 390 to 411 (KIRSGSQESPMGPPSSSSVTST). Positions 393–411 (SGSQESPMGPPSSSSVTST) are enriched in low complexity. In terms of domain architecture, IPT/TIG spans 418 to 498 (EMTPSSSSLK…ISTASEFTYE (81 aa)). The stretch at 616–646 (DGSTPLHTACKNSASRIARLIISIDSSAIDV) is one ANK repeat. The IQ domain occupies 957–984 (EAAMVIQRAYRVYRARSTTRRQEDIERR). Residues 1121–1185 (CPQTSGDQRN…KPPYGCGTLA (65 aa)) are disordered. Residues 1128-1147 (QRNKRDSDGERKRDAHHDAP) are compositionally biased toward basic and acidic residues.

This sequence belongs to the CAMTA family. As to quaternary structure, may interact with calmodulin. Expressed broadly in the nervous system.

The protein resides in the nucleus. Its function is as follows. Transcription factor. Positively modulates neuronal levels of the ubiquitous Ca2+ sensor calmodulin/cmd-1, probably by direct binding to the cmd-1 promoter, thereby regulating Ca2+ signaling, physiology, and behavior. In Caenorhabditis elegans, this protein is Calmodulin-binding transcription activator homolog 1.